Here is a 157-residue protein sequence, read N- to C-terminus: Phosphopantetheine adenylyltransferase (157 aa).

This sequence belongs to the eukaryotic CoaD family. In terms of assembly, monomer.

Its subcellular location is the cytoplasm. The catalysed reaction is (R)-4'-phosphopantetheine + ATP + H(+) = 3'-dephospho-CoA + diphosphate. It functions in the pathway cofactor biosynthesis; coenzyme A biosynthesis. Functionally, reversibly transfers an adenylyl group from ATP to 4'-phosphopantetheine, yielding dephospho-CoA (dPCoA) and pyrophosphate. In Pyrococcus abyssi (strain GE5 / Orsay), this protein is Phosphopantetheine adenylyltransferase.